Reading from the N-terminus, the 340-residue chain is Solute carrier family 35 member G3 (340 aa).

Residues 11–31 (PDFTQPSPPSTPSSLTSNHHN) form a disordered region. Helical transmembrane passes span 39–59 (TKGL…VGPF), 69–89 (LPSL…ALIL), 107–127 (FLHA…VQVV), 160–180 (AWCG…PGLG), 189–209 (LYTA…SLGL), 223–243 (TVAF…LFVL), 257–277 (CMVA…YAVT), 283–303 (LVCA…YYVL), and 307–327 (VAPS…IITA). Residues 51–176 (LSAGFVGPFS…STLGLIIIVG (126 aa)) form the EamA 1 domain. The region spanning 223-327 (TVAFLFGLVG…VLGSIAIITA (105 aa)) is the EamA 2 domain.

The protein belongs to the SLC35G solute transporter family.

The protein resides in the membrane. In Rattus norvegicus (Rat), this protein is Solute carrier family 35 member G3 (Slc35g3).